The following is a 352-amino-acid chain: N-terminal EF-hand calcium-binding protein 1 (352 aa).

S4 is subject to Phosphoserine. 2 EF-hand domains span residues 26–61 (KGMS…GVLS) and 60–95 (LSGE…HLGE). D39, N41, D43, K45, and E50 together coordinate Ca(2+). Positions 135–163 (LLKETLNQLQSLQNSLECAMETTEEQTRQ) form a coiled coil. The disordered stretch occupies residues 180–202 (GKRSSRRVQRHNSFSPNSPQFNV). The span at 190–202 (HNSFSPNSPQFNV) shows a compositional bias: polar residues. Residues S192 and S197 each carry the phosphoserine modification. Positions 209 to 275 (EEDNQWMTQI…EEFQLALKHY (67 aa)) form a coiled coil. In terms of domain architecture, ABM spans 252-340 (MLVQRQMSVI…LETPELTSTM (89 aa)).

In terms of assembly, interacts with STX1. May interact with CPNE6.

It is found in the cytoplasm. The sequence is that of N-terminal EF-hand calcium-binding protein 1 (NECAB1) from Pongo abelii (Sumatran orangutan).